Reading from the N-terminus, the 362-residue chain is 3-dehydroquinate synthase (362 aa).

Residues 71–76 (DGEQYK), 105–109 (GVIGD), 129–130 (TT), K142, K151, and 169–172 (CLQT) contribute to the NAD(+) site. Zn(2+) is bound by residues E184, H247, and H264.

It belongs to the sugar phosphate cyclases superfamily. Dehydroquinate synthase family. Co(2+) is required as a cofactor. It depends on Zn(2+) as a cofactor. Requires NAD(+) as cofactor.

The protein localises to the cytoplasm. It carries out the reaction 7-phospho-2-dehydro-3-deoxy-D-arabino-heptonate = 3-dehydroquinate + phosphate. The protein operates within metabolic intermediate biosynthesis; chorismate biosynthesis; chorismate from D-erythrose 4-phosphate and phosphoenolpyruvate: step 2/7. Functionally, catalyzes the conversion of 3-deoxy-D-arabino-heptulosonate 7-phosphate (DAHP) to dehydroquinate (DHQ). The chain is 3-dehydroquinate synthase from Cronobacter sakazakii (strain ATCC BAA-894) (Enterobacter sakazakii).